A 337-amino-acid chain; its full sequence is Glyceraldehyde-3-phosphate dehydrogenase (337 aa).

NAD(+) contacts are provided by residues 12-13 (RI), Asp34, and Arg79. D-glyceraldehyde 3-phosphate is bound by residues 150-152 (SCT), Thr181, 210-211 (TG), and Arg233. The Nucleophile role is filled by Cys151. NAD(+) is bound at residue Asn315.

This sequence belongs to the glyceraldehyde-3-phosphate dehydrogenase family. As to quaternary structure, homotetramer.

The protein resides in the cytoplasm. It carries out the reaction D-glyceraldehyde 3-phosphate + phosphate + NAD(+) = (2R)-3-phospho-glyceroyl phosphate + NADH + H(+). Its pathway is carbohydrate degradation; glycolysis; pyruvate from D-glyceraldehyde 3-phosphate: step 1/5. The polypeptide is Glyceraldehyde-3-phosphate dehydrogenase (GPD) (Ajellomyces capsulatus (Darling's disease fungus)).